Here is a 415-residue protein sequence, read N- to C-terminus: Gamma-glutamyl phosphate reductase (415 aa).

This sequence belongs to the gamma-glutamyl phosphate reductase family.

The protein localises to the cytoplasm. It carries out the reaction L-glutamate 5-semialdehyde + phosphate + NADP(+) = L-glutamyl 5-phosphate + NADPH + H(+). It functions in the pathway amino-acid biosynthesis; L-proline biosynthesis; L-glutamate 5-semialdehyde from L-glutamate: step 2/2. Catalyzes the NADPH-dependent reduction of L-glutamate 5-phosphate into L-glutamate 5-semialdehyde and phosphate. The product spontaneously undergoes cyclization to form 1-pyrroline-5-carboxylate. The chain is Gamma-glutamyl phosphate reductase from Bacillus cereus (strain ZK / E33L).